The chain runs to 497 residues: L-arabinose isomerase (497 aa).

4 residues coordinate Mn(2+): E306, E331, H348, and H447.

The protein belongs to the arabinose isomerase family. Requires Mn(2+) as cofactor.

It catalyses the reaction beta-L-arabinopyranose = L-ribulose. It participates in carbohydrate degradation; L-arabinose degradation via L-ribulose; D-xylulose 5-phosphate from L-arabinose (bacterial route): step 1/3. Functionally, catalyzes the conversion of L-arabinose to L-ribulose. This is L-arabinose isomerase from Halalkalibacterium halodurans (strain ATCC BAA-125 / DSM 18197 / FERM 7344 / JCM 9153 / C-125) (Bacillus halodurans).